A 508-amino-acid chain; its full sequence is Probable zinc metalloprotease MCYG_04217 (508 aa).

Asn111 carries an N-linked (GlcNAc...) asparagine glycan. Residues His182, Asp202, and Glu238 each contribute to the Zn(2+) site. Asn253 is a glycosylation site (N-linked (GlcNAc...) asparagine). Asp265 serves as a coordination point for Zn(2+). The Fibronectin type-III domain occupies 422-508; that stretch reads MPRNVRVDTS…ERGVAVLPFP (87 aa). Asn435 carries an N-linked (GlcNAc...) asparagine glycan.

This sequence belongs to the peptidase M28 family. M28B subfamily. The cofactor is Zn(2+).

It is found in the secreted. The polypeptide is Probable zinc metalloprotease MCYG_04217 (Arthroderma otae (strain ATCC MYA-4605 / CBS 113480) (Microsporum canis)).